The chain runs to 914 residues: DNA mismatch repair protein MutS (914 aa).

The interval 1-25 is disordered; it reads MDKKNDHKNNLIPQPASSFASSQER. Over residues 11–25 the composition is skewed to polar residues; sequence LIPQPASSFASSQER. Position 662–669 (662–669) interacts with ATP; the sequence is GPNMGGKS.

The protein belongs to the DNA mismatch repair MutS family.

Functionally, this protein is involved in the repair of mismatches in DNA. It is possible that it carries out the mismatch recognition step. This protein has a weak ATPase activity. The chain is DNA mismatch repair protein MutS from Bartonella tribocorum (strain CIP 105476 / IBS 506).